The chain runs to 314 residues: Bifunctional riboflavin kinase/FMN adenylyltransferase (314 aa).

Belongs to the RibF family.

The enzyme catalyses riboflavin + ATP = FMN + ADP + H(+). It catalyses the reaction FMN + ATP + H(+) = FAD + diphosphate. The protein operates within cofactor biosynthesis; FAD biosynthesis; FAD from FMN: step 1/1. It functions in the pathway cofactor biosynthesis; FMN biosynthesis; FMN from riboflavin (ATP route): step 1/1. Functionally, catalyzes the phosphorylation of riboflavin to FMN followed by the adenylation of FMN to FAD. Can also catalyze the phosphorylation of the toxic riboflavin analogs 8-demethyl-8-aminoriboflavin (AF) to 8-demethyl-8-aminoriboflavin mononucleotide (AFMN) and roseoflavin (RoF) to roseoflavin mononucleotide (RoFMN), and the adenylation of AFMN to 8-demethyl-8-aminoriboflavin adenine dinucleotide (AFAD). The protein is Bifunctional riboflavin kinase/FMN adenylyltransferase of Listeria monocytogenes serovar 1/2a (strain ATCC BAA-679 / EGD-e).